The primary structure comprises 447 residues: Elongation factor 1-alpha (447 aa).

One can recognise a tr-type G domain in the interval 5–230; that stretch reads KTHINIVVIG…DQINEPKRPS (226 aa). The G1 stretch occupies residues 14 to 21; that stretch reads GHVDSGKS. 14–21 lines the GTP pocket; that stretch reads GHVDSGKS. The residue at position 55 (Lys-55) is an N6,N6-dimethyllysine. The interval 70 to 74 is G2; the sequence is GITID. The residue at position 79 (Lys-79) is an N6,N6,N6-trimethyllysine. Residues 91-94 form a G3 region; sequence DAPG. GTP-binding positions include 91-95 and 153-156; these read DAPGH and NKMD. The segment at 153-156 is G4; that stretch reads NKMD. Residue Lys-187 is modified to N6,N6,N6-trimethyllysine. The interval 194–196 is G5; it reads SGF. At Lys-261 the chain carries N6-methyllysine. Glu-289 is subject to 5-glutamyl glycerylphosphorylethanolamine. An N6,N6,N6-trimethyllysine modification is found at Lys-306. Glu-362 is subject to 5-glutamyl glycerylphosphorylethanolamine. Position 396 is an N6,N6,N6-trimethyllysine (Lys-396).

The protein belongs to the TRAFAC class translation factor GTPase superfamily. Classic translation factor GTPase family. EF-Tu/EF-1A subfamily.

It is found in the cytoplasm. Its function is as follows. This protein promotes the GTP-dependent binding of aminoacyl-tRNA to the A-site of ribosomes during protein biosynthesis. This Oryza sativa subsp. japonica (Rice) protein is Elongation factor 1-alpha (REFA1).